We begin with the raw amino-acid sequence, 803 residues long: MTGLEEDQEFDFDFLFEFNQSDEGAVAAPAEHYGYAAPGLGAGLPLSAAHPSLPAPCHDLQSSAAGVSAVGYGGTVDSGPSGYFLSSGGIRPNGAPALESPRIEITSYLGLHHNSSQFLHEVDVEDVLPKRSPSTATLNLPSLEAYRDPSCLSPASSLSSRSCNSEASSYESSFSYPYASPQTSPWQSPCVSPKTTDPEEGFARGLGACGLLGSPRHSPSTSPRTSVTEESWLGARTSRPSSPCNKRKYGLNGRQLSCSPHPSPTPSPQGSPRVSVTDDTWLGNTTQYTSSAIVAAINALSTDSSLDLGDGVPVKARKTTLDHSPAVALKVEPAGEDLGTTPPTPDFQPEEFAAFQHIRKGAFCDQYLSVPQHPYPWARPRSPASYTSPSLPALDWQLPSHSGPYELRIEVQPKSHHRAHYETEGSRGAVKASAGGHPSVQLHGYVESEPLTLQLFIGTADDRLLRPHAFYQVHRITGKTVSTASHEAVVCSTKVLEIPLLPENNMRATIDCAGILKLRNSDIELRKGETDIGRKNTRVRLVFRVHIPQPNGRTLSLQVASNPIECSQRSAQELPLVEKQSAASGPVLGGKRMVLSGHNFLQDSKVIFVEKAPDGHHIWEMEAKTEGDLCKPNSLVVEIPPFRNQRITSPVQVNFYVCNGKRKRSQYQHFTYLPANVPIIKTEPSDDYEPALTCGPMSQGLSPLPKPCYGQPLALPPDPGACLMPGFPPRPQGSASPELHDLSCAPYGSATAGPGHSPLGLPRPVGGVLASQEAPRPSGVPPGPPQPPPPTLLQPQVSPTSSG.

Residues 101–106 (PRIEIT) are calcineurin-binding. The transactivation domain A (TAD-A) stretch occupies residues 109–199 (LGLHHNSSQF…CVSPKTTDPE (91 aa)). The span at 181–195 (PQTSPWQSPCVSPKT) shows a compositional bias: polar residues. The tract at residues 181 to 279 (PQTSPWQSPC…GSPRVSVTDD (99 aa)) is disordered. Tandem repeats lie at residues 184 to 200 (SPWQ…DPEE) and 214 to 230 (SPRH…VTEE). Residues 184-279 (SPWQSPCVSP…GSPRVSVTDD (96 aa)) form a 3 X SP repeats region. Ser214 and Ser218 each carry phosphoserine. A compositionally biased stretch (low complexity) spans 214-231 (SPRHSPSTSPRTSVTEES). At Ser226 the chain carries Phosphoserine; by PKA. Residues 246–248 (KRK) carry the Nuclear localization signal motif. Copy 3 of the repeat occupies 263–279 (SPTPSPQGSPRVSVTDD). Ser275 bears the Phosphoserine; by PKA mark. The Nuclear export signal signature appears at 291–302 (SAIVAAINALST). One can recognise an RHD domain in the interval 389–571 (PSLPALDWQL…NPIECSQRSA (183 aa)). Residues 418 to 425 (RAHYETEG) mediate DNA binding. A Nuclear localization signal motif is present at residues 661 to 663 (KRK). The disordered stretch occupies residues 723-803 (LMPGFPPRPQ…QPQVSPTSSG (81 aa)). Over residues 778–792 (SGVPPGPPQPPPPTL) the composition is skewed to pro residues. The segment covering 793–803 (LQPQVSPTSSG) has biased composition (low complexity).

Member of the multicomponent NFATC transcription complex that consists of at least two components, a pre-existing cytoplasmic component NFATC2 and an inducible nuclear component NFATC1. Other members such as NFATC4, NFATC3 or members of the activating protein-1 family, MAF, GATA4 and Cbp/p300 can also bind the complex. NFATC proteins bind to DNA as monomers. Interacts with HOMER2 and HOMER3; this interaction may compete with calcineurin/PPP3CA-binding and hence prevent NFATC1 dephosphorylation and activation. Interacts with TLE6/GRG6. In terms of processing, phosphorylated by NFATC-kinase and GSK3B; phosphorylation induces NFATC1 nuclear exit and dephosphorylation by calcineurin promotes nuclear import. Phosphorylation by PKA and DYRK2 negatively modulates nuclear accumulation, and promotes subsequent phosphorylation by GSK3B or casein kinase 1.

Its subcellular location is the cytoplasm. It is found in the nucleus. Its function is as follows. Plays a role in the inducible expression of cytokine genes in T-cells, especially in the induction of the IL-2 or IL-4 gene transcription. Also controls gene expression in embryonic cardiac cells. Could regulate not only the activation and proliferation but also the differentiation and programmed death of T-lymphocytes as well as lymphoid and non-lymphoid cells. Required for osteoclastogenesis and regulates many genes important for osteoclast differentiation and function. The chain is Nuclear factor of activated T-cells, cytoplasmic 1 from Bos taurus (Bovine).